Here is a 1622-residue protein sequence, read N- to C-terminus: Transient receptor potential cation channel subfamily M member 1 (1622 aa).

Disordered stretches follow at residues 1–25 (MGSM…GSQK), 64–95 (PPLP…KHTQ), 450–490 (LAPP…EVEE), 618–641 (LGME…EEEI), and 822–856 (SKEN…HKKQ). The Cytoplasmic portion of the chain corresponds to 1–875 (MGSMRKMSSS…CEFYNAPIVK (875 aa)). Positions 8–25 (SSSFKRGSIKSSTSGSQK) are enriched in low complexity. Residues 70–95 (APSTTGEDTKQADTQSGKWSVSKHTQ) show a composition bias toward polar residues. The span at 472-483 (GRGKGKGKKKGK) shows a compositional bias: basic residues. 2 stretches are compositionally biased toward basic and acidic residues: residues 823–832 (KENEDGKEKE) and 843–853 (GSRKGDEENEH). A helical membrane pass occupies residues 876–896 (FWFYTISYLGYLLLFNYVILV). The Extracellular segment spans residues 897 to 942 (RMDGWPSPQEWIVISYIVSLALEKIREILMSEPGKLSQKIKVWLQE). The chain crosses the membrane as a helical span at residues 943–963 (YWNITDLVAISMFMVGAILRL). At 964 to 973 (QSQPYMGYGR) the chain is on the cytoplasmic side. A helical membrane pass occupies residues 974-994 (VIYCVDIILWYIRVLDIFGVN). The Extracellular segment spans residues 995-1006 (KYLGPYVMMIGK). The helical transmembrane segment at 1007 to 1027 (MMIDMLYFVVIMLVVLMSFGV) threads the bilayer. The Cytoplasmic portion of the chain corresponds to 1028–1099 (ARQAILHPEE…CIPGAWLTPA (72 aa)). A helical membrane pass occupies residues 1100-1120 (LMACYLLVANILLVNLLIAVF). N-linked (GlcNAc...) asparagine glycosylation is present at N1121. Topologically, residues 1121 to 1150 (NNTFFEVKSISNQVWKFQRYQLIMTFHDRP) are extracellular. A helical membrane pass occupies residues 1151-1171 (VLPPPMIILSHIYIIIMRLSG). Residues 1172 to 1622 (RCRKKREGDQ…QEKRSAETEC (451 aa)) are Cytoplasmic-facing. Positions 1224–1252 (DERIRVTSERVENMSMRLEEINERENFMK) form a coiled coil. 3 disordered regions span residues 1354 to 1383 (EDAK…RSRL), 1389 to 1408 (LSTE…EFDP), and 1567 to 1622 (CLRS…ETEC). A compositionally biased stretch (basic and acidic residues) spans 1613-1622 (QEKRSAETEC).

It belongs to the transient receptor (TC 1.A.4) family. LTrpC subfamily. TRPM1 sub-subfamily. Homodimer. Interacts with TRPM3; the interaction results in the formation of a heteromultimeric cation channel complex that are functionally different from the homomeric channels. Interacts with GPR179. Associates with both guanine nucleotide-binding proteins G(o) and beta-gamma G protein dimer; implicated in directly regulating TRPM1 channel open-state. Expressed in the retina where it localizes on dendritic tips of ON bipolar cells. Specifically, it is expressed in retinal bipolar cells (BPCs) of the ON subtype. Not detected in brain, lung, liver, heart, kidney, spleen or small intestine. Also expressed at high levels in poorly metastatic variants of B16 melanoma and at much reduced levels in highly metastatic variants of B16 melanoma.

It localises to the cell membrane. The protein resides in the endoplasmic reticulum membrane. The protein localises to the cell projection. Its subcellular location is the axon. The enzyme catalyses Ca(2+)(in) = Ca(2+)(out). It catalyses the reaction Mg(2+)(in) = Mg(2+)(out). The catalysed reaction is Mn(2+)(in) = Mn(2+)(out). It carries out the reaction Ni(2+)(in) = Ni(2+)(out). Inhibited by extracellular zinc ions. Inhibited by intracellular Mg(2+). Activated by the neuroactive steroid pregnenolone sulfate. Negatively regulated by activation of GRM6 receptors in the ON-bipolar cells. Its function is as follows. Constitutively open nonselective divalent cation-conducting channels which mediate the influx of Ca(2+), Mg(2+), Mn(2+), Ba(2+), and Ni(2+) into the cytoplasm, leading to membrane depolarization. Impermeable to zinc ions. In addition, forms heteromultimeric ion channels with TRPM3 which are permeable for calcium and zinc ions. Plays an essential role for the depolarizing photoresponse of retinal ON bipolar cells. In the dark, tonic release of glutamate activates the G-protein coupled receptor for glutamate (GRM6), its activation induces the release of G(o) and the beta-gamma G protein dimer. Both subunits can interact and inactivate the TRPM1 channel. A light onset, induces decrease in glutamate release and deactivation of GRM6 leading to channel opening and membrane depolarization. May play a role in metastasis suppression. This Mus musculus (Mouse) protein is Transient receptor potential cation channel subfamily M member 1.